A 233-amino-acid chain; its full sequence is C-type lectin domain-containing protein 87 (233 aa).

Residues 1 to 20 (MRFFRFLVFPVIAGLSSVLA) form the signal peptide. An N-linked (GlcNAc...) asparagine glycan is attached at Asn-26. O-linked (Xyl...) (chondroitin sulfate) serine glycosylation is present at Ser-32. Residue Asn-81 is glycosylated (N-linked (GlcNAc...) asparagine). The 131-residue stretch at 93-223 (FADSCYWIET…CTYLLYSICE (131 aa)) folds into the C-type lectin domain. 2 cysteine pairs are disulfide-bonded: Cys-114–Cys-222 and Cys-193–Cys-214. Asn-225 carries an N-linked (GlcNAc...) asparagine glycan.

The chain is C-type lectin domain-containing protein 87 from Caenorhabditis briggsae.